Here is a 434-residue protein sequence, read N- to C-terminus: FAD-dependent monooxygenase cfoG (434 aa).

Positions 1–22 (MKSSPGLHIIIVGAGITGLATA) are cleaved as a signal peptide. Glu36 contacts FAD. Catalysis depends on residues Arg193 and Tyr233. Residues Asp314 and Gly327 each contribute to the FAD site.

Belongs to the paxM FAD-dependent monooxygenase family. As to quaternary structure, monomer. It depends on FAD as a cofactor.

The protein operates within secondary metabolite biosynthesis; flavonoid biosynthesis. Monooxygenase; part of the gene cluster that mediates the biosynthesis of chlorflavonin, a fungal flavonoid with acetolactate synthase inhibitory activity. Within the pathway, cfoG is responsible for the hydroxylation of the flavonoid skeleton at position C8. The pathway begins with the PKS-NRPS hybrid synthetase cfoA that uses benzoic acid or p-hydroxybenzoic acid as a starter unit with four rounds of chain elongation using malonyl-CoA to form the chalcone skeleton. Then, a new type of chalcone isomerase, cfoK, catalyzes the conversion of the chalcone into a flavanone by a histidine-mediated oxa-Michael addition mechanism. The desaturation of flavanone to flavone is catalyzed by a new type of flavone synthase, the flavin mononucleotide (FMN)-dependent oxidoreductase cfoJ. Monooxygenases cfoF, cfoG, and P450 cfoH are responsible for the hydroxylation of the flavonoid skeleton at sites C3, C8, and C2', respectively. Like cfoF, the dehydratase cfoI plays also a role in the hydroxylation of position C3. Methyltransferases cfoB, cfoC, and cfoD then catalyze the methylation of C7-OH, C8-OH, and C3-OH, respectively. Finally, the monooxygenase cfoE is responsible for the chlorination of flavonoid at position C3'. The protein is FAD-dependent monooxygenase cfoG of Aspergillus candidus.